The primary structure comprises 94 residues: Co-chaperonin GroES (94 aa).

In terms of assembly, heptamer of 7 subunits arranged in a ring. Interacts with the chaperonin GroEL.

It is found in the cytoplasm. In terms of biological role, together with the chaperonin GroEL, plays an essential role in assisting protein folding. The GroEL-GroES system forms a nano-cage that allows encapsulation of the non-native substrate proteins and provides a physical environment optimized to promote and accelerate protein folding. GroES binds to the apical surface of the GroEL ring, thereby capping the opening of the GroEL channel. The sequence is that of Co-chaperonin GroES from Thermoanaerobacter brockii (Thermoanaerobium brockii).